We begin with the raw amino-acid sequence, 86 residues long: Large ribosomal subunit protein eL20 (86 aa).

The protein belongs to the eukaryotic ribosomal protein eL20 family. Part of the 50S ribosomal subunit. Binds 23S rRNA.

The polypeptide is Large ribosomal subunit protein eL20 (Saccharolobus islandicus (strain Y.N.15.51 / Yellowstone #2) (Sulfolobus islandicus)).